The sequence spans 278 residues: Large ribosomal subunit protein uL2 (278 aa).

The tract at residues 222–278 (GVVMNPIDHPHGGGEGRTSGGRHPVTPWGKPTKGKKTRSNKSTDKFILISRHKRKKK) is disordered.

This sequence belongs to the universal ribosomal protein uL2 family. Part of the 50S ribosomal subunit. Forms a bridge to the 30S subunit in the 70S ribosome.

In terms of biological role, one of the primary rRNA binding proteins. Required for association of the 30S and 50S subunits to form the 70S ribosome, for tRNA binding and peptide bond formation. It has been suggested to have peptidyltransferase activity; this is somewhat controversial. Makes several contacts with the 16S rRNA in the 70S ribosome. The protein is Large ribosomal subunit protein uL2 of Rhodopseudomonas palustris (strain ATCC BAA-98 / CGA009).